The following is a 233-amino-acid chain: Phosphoglycolate phosphatase 2 (233 aa).

Asp-13 functions as the Nucleophile in the catalytic mechanism. 2 residues coordinate Mg(2+): Asp-13 and Asp-15. Residue Lys-152 participates in substrate binding. Mg(2+) contacts are provided by Asp-174 and Asp-178.

The protein belongs to the archaeal SPP-like hydrolase family. It depends on Mg(2+) as a cofactor.

The catalysed reaction is 2-phosphoglycolate + H2O = glycolate + phosphate. Catalyzes the dephosphorylation of 2-phosphoglycolate. This Saccharolobus solfataricus (strain ATCC 35092 / DSM 1617 / JCM 11322 / P2) (Sulfolobus solfataricus) protein is Phosphoglycolate phosphatase 2.